Reading from the N-terminus, the 194-residue chain is Dof zinc finger protein DOF1.7 (194 aa).

The Dof-type zinc finger occupies 33-87; sequence LKCPRCDSPNTKFCYYNNYNLSQPRHFCKNCRRYWTKGGALRNIPVGGGTRKSNK. Zn(2+) contacts are provided by Cys-35, Cys-38, Cys-60, and Cys-63. Residues 74-125 form a disordered region; sequence RNIPVGGGTRKSNKRSGSSPSSNLKNQTVAEKPDHHGSGSEEKEERVSGQEM. The span at 88–99 shows a compositional bias: low complexity; it reads RSGSSPSSNLKN. Residues 104 to 121 show a composition bias toward basic and acidic residues; the sequence is EKPDHHGSGSEEKEERVS.

The protein localises to the nucleus. Its function is as follows. Transcription factor that binds specifically to a 5'-AA[AG]G-3' consensus core sequence. The polypeptide is Dof zinc finger protein DOF1.7 (DOF1.7) (Arabidopsis thaliana (Mouse-ear cress)).